Reading from the N-terminus, the 400-residue chain is Formate-dependent phosphoribosylglycinamide formyltransferase (400 aa).

N(1)-(5-phospho-beta-D-ribosyl)glycinamide is bound by residues Glu21 to Leu22 and Glu81. Residues Arg114, Lys155, Ser160 to Gln165, Glu195 to Ile198, and Glu203 each bind ATP. The ATP-grasp domain occupies Arg119 to Leu313. Mg(2+) is bound by residues Glu272 and Glu284. Residues Asp291, Lys360, and Arg367–Arg368 each bind N(1)-(5-phospho-beta-D-ribosyl)glycinamide.

It belongs to the PurK/PurT family. Homodimer.

The catalysed reaction is N(1)-(5-phospho-beta-D-ribosyl)glycinamide + formate + ATP = N(2)-formyl-N(1)-(5-phospho-beta-D-ribosyl)glycinamide + ADP + phosphate + H(+). The protein operates within purine metabolism; IMP biosynthesis via de novo pathway; N(2)-formyl-N(1)-(5-phospho-D-ribosyl)glycinamide from N(1)-(5-phospho-D-ribosyl)glycinamide (formate route): step 1/1. Involved in the de novo purine biosynthesis. Catalyzes the transfer of formate to 5-phospho-ribosyl-glycinamide (GAR), producing 5-phospho-ribosyl-N-formylglycinamide (FGAR). Formate is provided by PurU via hydrolysis of 10-formyl-tetrahydrofolate. The protein is Formate-dependent phosphoribosylglycinamide formyltransferase of Methylococcus capsulatus (strain ATCC 33009 / NCIMB 11132 / Bath).